Consider the following 257-residue polypeptide: Imidazole glycerol phosphate synthase subunit HisF (257 aa).

Catalysis depends on residues aspartate 11 and aspartate 130.

This sequence belongs to the HisA/HisF family. As to quaternary structure, heterodimer of HisH and HisF.

The protein resides in the cytoplasm. The enzyme catalyses 5-[(5-phospho-1-deoxy-D-ribulos-1-ylimino)methylamino]-1-(5-phospho-beta-D-ribosyl)imidazole-4-carboxamide + L-glutamine = D-erythro-1-(imidazol-4-yl)glycerol 3-phosphate + 5-amino-1-(5-phospho-beta-D-ribosyl)imidazole-4-carboxamide + L-glutamate + H(+). The protein operates within amino-acid biosynthesis; L-histidine biosynthesis; L-histidine from 5-phospho-alpha-D-ribose 1-diphosphate: step 5/9. In terms of biological role, IGPS catalyzes the conversion of PRFAR and glutamine to IGP, AICAR and glutamate. The HisF subunit catalyzes the cyclization activity that produces IGP and AICAR from PRFAR using the ammonia provided by the HisH subunit. This is Imidazole glycerol phosphate synthase subunit HisF from Xylella fastidiosa (strain M23).